Reading from the N-terminus, the 1855-residue chain is Unconventional myosin-Va (1855 aa).

Alanine 2 carries the N-acetylalanine modification. In terms of domain architecture, Myosin N-terminal SH3-like spans 8-60 (TKFARVWIPDPEEVWKSAELLKDYKPGDKVLLLHLEEGKDLEYHLDPKTKELP). The 695-residue stretch at 69–763 (VGENDLTALS…QVAYLEKLRA (695 aa)) folds into the Myosin motor domain. ATP is bound at residue 163 to 170 (GESGAGKT). Positions 598–631 (AISPTSATSSGRTPLTRTPAKPTKGRPGQMAKEH) are disordered. Residue serine 600 is modified to Phosphoserine. Residues 600–613 (SPTSATSSGRTPLT) show a composition bias toward polar residues. The actin-binding stretch occupies residues 643–665 (LHLLMETLNATTPHYVRCIKPND). IQ domains follow at residues 766–788 (LRAA…KYLR), 789–818 (MRKA…TKAA), 814–836 (RTKA…RYKI), 837–861 (RRAA…RKIL), 862–883 (REHK…THYK), and 885–914 (SMHA…EARS). Coiled coils occupy residues 914–1237 (SVER…APEV) and 1338–1445 (VYEG…ELEV). Threonine 1032 is subject to Phosphothreonine. Phosphoserine is present on residues serine 1452 and serine 1652. A Dilute domain is found at 1534–1810 (TSTINSIKKV…IRTIQMRLRD (277 aa)). Position 1760 is a phosphothreonine (threonine 1760).

Belongs to the TRAFAC class myosin-kinesin ATPase superfamily. Myosin family. As to quaternary structure, may be a homodimer, which associates with multiple calmodulin or myosin light chains. Interacts with RIPL2, the interaction is required for its role in dendrite formation. Interacts with MLPH. Interacts with SYTL4. Interacts with MYRIP. Interacts with RAB10; mediates the transport to the plasma membrane of SLC2A4/GLUT4 storage vesicles. Interacts with FMR1; this interaction occurs in association with polyribosome. As to expression, detected in melanocytes.

It catalyses the reaction ATP + H2O = ADP + phosphate + H(+). In terms of biological role, processive actin-based motor that can move in large steps approximating the 36-nm pseudo-repeat of the actin filament. Can hydrolyze ATP in the presence of actin, which is essential for its function as a motor protein. Involved in melanosome transport. Also mediates the transport of vesicles to the plasma membrane. May also be required for some polarization process involved in dendrite formation. This is Unconventional myosin-Va (MYO5A) from Homo sapiens (Human).